The sequence spans 95 residues: MALFGGSSSQAPASATDNKVQAFKQQIAQEIAVANATDLVNKVSENCFEKCLQSPYKDGNEGCVDQCLAKYMRSWNVISKTYINRIQDASTTGEI.

A Twin CX3C motif motif is present at residues 47–67 (CFEKCLQSPYKDGNEGCVDQC). Disulfide bonds link cysteine 47/cysteine 67 and cysteine 51/cysteine 63.

It belongs to the small Tim family. Heterohexamer; composed of 3 copies of TIM8 and 3 copies of TIM13, named soluble 70 kDa complex. Associates with the TIM22 complex, whose core is composed of TIM22 and TIM54. Interacts with the transmembrane regions of multi-pass transmembrane proteins in transit.

It localises to the mitochondrion inner membrane. Mitochondrial intermembrane chaperone that participates in the import and insertion of some multi-pass transmembrane proteins into the mitochondrial inner membrane. Also required for the transfer of beta-barrel precursors from the TOM complex to the sorting and assembly machinery (SAM complex) of the outer membrane. Acts as a chaperone-like protein that protects the hydrophobic precursors from aggregation and guide them through the mitochondrial intermembrane space. The TIM8-TIM13 complex is non essential and only mediates the import of few proteins, while the predominant TIM9-TIM10 70 kDa complex is crucial and mediates the import of much more proteins. The chain is Mitochondrial import inner membrane translocase subunit TIM13 (TIM13) from Candida glabrata (strain ATCC 2001 / BCRC 20586 / JCM 3761 / NBRC 0622 / NRRL Y-65 / CBS 138) (Yeast).